The following is a 412-amino-acid chain: Eukaryotic initiation factor 4A-1 (412 aa).

A2 is modified (N-acetylalanine). Positions 39–67 (ESFDAMGLQENLLRGIYAYGFEKPSAIQQ) match the Q motif motif. Residues 70 to 240 (IVPFCKGLDV…RKFMSKPVRI (171 aa)) enclose the Helicase ATP-binding domain. Residue 83-90 (AQSGTGKT) participates in ATP binding. S104 carries the post-translational modification Phosphoserine. Position 145 is a phosphothreonine (T145). The DEAD box motif lies at 188–191 (DEAD). Residues 251-412 (GIKQFYVNVE…ELPSNVADLL (162 aa)) enclose the Helicase C-terminal domain.

This sequence belongs to the DEAD box helicase family. eIF4A subfamily. EIF4F is a multi-subunit complex, the composition of which varies with external and internal environmental conditions. It is composed of at least EIF4A, EIF4E and EIF4G. Interacts with CDKA-1. Interacts with MRF1, MRF2, MRF3/ECIP1 and MRF4. Highly expressed in the whole plant.

Its subcellular location is the cytoplasm. It catalyses the reaction ATP + H2O = ADP + phosphate + H(+). Its function is as follows. ATP-dependent RNA helicase which is a subunit of the eIF4F complex involved in cap recognition and is required for mRNA binding to ribosome. In the current model of translation initiation, eIF4A unwinds RNA secondary structures in the 5'-UTR of mRNAs which is necessary to allow efficient binding of the small ribosomal subunit, and subsequent scanning for the initiator codon. The sequence is that of Eukaryotic initiation factor 4A-1 from Arabidopsis thaliana (Mouse-ear cress).